Consider the following 264-residue polypeptide: tRNA pseudouridine synthase A (264 aa).

The active-site Nucleophile is aspartate 51. Position 109 (tyrosine 109) interacts with substrate.

Belongs to the tRNA pseudouridine synthase TruA family. Homodimer.

It carries out the reaction uridine(38/39/40) in tRNA = pseudouridine(38/39/40) in tRNA. Functionally, formation of pseudouridine at positions 38, 39 and 40 in the anticodon stem and loop of transfer RNAs. The sequence is that of tRNA pseudouridine synthase A from Yersinia pseudotuberculosis serotype O:1b (strain IP 31758).